Here is a 482-residue protein sequence, read N- to C-terminus: MMETMPNWLMQRAFLTPDRTAIEIEEEKVTFMELHEKVVSVCEHLTHVGVERGQKVAVLMKNGMEMITVIHALSYVGAVAVLLNTRLSREELLWQMDDAEVVCLVTDQDFDAKDVPVYSLAEVMNGPKEEASIQEEFSLEEAMTIIYTSGTTGKPKGVILTYGNHWASAVGSSLNLGLRDDDCWLACMPMFHVGGLSLLMKNIMYGMRILLVPKYDADFIHKALQTRGVTIISVVSKMLTDLLERLGAETYPSSLRCMLLGGGPAPKPLLEACVEKGIPVYQTYGMTETSSQICTLSADYMLTKVGSAGKPLFQCQLRIEKDGVVVPPLVEGEIVVKGPNVTGGYFNREDATRETIQNGWLHTGDLGYLDEEGFLYVLDRRSDLIISGGENIYPAQIEEVLLSHPAVAEAGVVGMSDDKWGQVPAAFVVKSGAVTEEEILHFCEEKLAKYKVPKKACFLEELPRNASKKLLRRELRQLVEEM.

It belongs to the ATP-dependent AMP-binding enzyme family. MenE subfamily.

It carries out the reaction 2-succinylbenzoate + ATP + CoA = 2-succinylbenzoyl-CoA + AMP + diphosphate. The protein operates within quinol/quinone metabolism; 1,4-dihydroxy-2-naphthoate biosynthesis; 1,4-dihydroxy-2-naphthoate from chorismate: step 5/7. It participates in quinol/quinone metabolism; menaquinone biosynthesis. Converts 2-succinylbenzoate (OSB) to 2-succinylbenzoyl-CoA (OSB-CoA). In Bacillus cereus (strain ATCC 14579 / DSM 31 / CCUG 7414 / JCM 2152 / NBRC 15305 / NCIMB 9373 / NCTC 2599 / NRRL B-3711), this protein is 2-succinylbenzoate--CoA ligase.